The primary structure comprises 64 residues: Large ribosomal subunit protein bL35 (64 aa).

The tract at residues 1–56 (MPKMKSNKSVAARFKLTGSGQLKRTRPGKRHKLSKKSSQEKRNLSKQPLVDKGQVG) is disordered. Over residues 23–35 (KRTRPGKRHKLSK) the composition is skewed to basic residues.

Belongs to the bacterial ribosomal protein bL35 family.

The sequence is that of Large ribosomal subunit protein bL35 from Chlamydia abortus (strain DSM 27085 / S26/3) (Chlamydophila abortus).